Here is an 84-residue protein sequence, read N- to C-terminus: Large ribosomal subunit protein bL31B (84 aa).

This sequence belongs to the bacterial ribosomal protein bL31 family. Type B subfamily. As to quaternary structure, part of the 50S ribosomal subunit.

This Photorhabdus laumondii subsp. laumondii (strain DSM 15139 / CIP 105565 / TT01) (Photorhabdus luminescens subsp. laumondii) protein is Large ribosomal subunit protein bL31B.